A 453-amino-acid chain; its full sequence is Ribulose bisphosphate carboxylase large chain (453 aa).

Residues 1 to 2 (MS) constitute a propeptide that is removed on maturation. Proline 3 carries the post-translational modification N-acetylproline. Lysine 14 is modified (N6,N6,N6-trimethyllysine). 2 residues coordinate substrate: asparagine 123 and threonine 173. Catalysis depends on lysine 175, which acts as the Proton acceptor. Residue lysine 177 coordinates substrate. Mg(2+)-binding residues include lysine 201, aspartate 203, and glutamate 204. Lysine 201 carries the N6-carboxylysine modification. The Proton acceptor role is filled by histidine 294. Arginine 295, histidine 327, and serine 379 together coordinate substrate.

It belongs to the RuBisCO large chain family. Type I subfamily. In terms of assembly, heterohexadecamer of 8 large chains and 8 small chains; disulfide-linked. The disulfide link is formed within the large subunit homodimers. It depends on Mg(2+) as a cofactor. The disulfide bond which can form in the large chain dimeric partners within the hexadecamer appears to be associated with oxidative stress and protein turnover.

It is found in the plastid. The protein resides in the chloroplast. The catalysed reaction is 2 (2R)-3-phosphoglycerate + 2 H(+) = D-ribulose 1,5-bisphosphate + CO2 + H2O. The enzyme catalyses D-ribulose 1,5-bisphosphate + O2 = 2-phosphoglycolate + (2R)-3-phosphoglycerate + 2 H(+). RuBisCO catalyzes two reactions: the carboxylation of D-ribulose 1,5-bisphosphate, the primary event in carbon dioxide fixation, as well as the oxidative fragmentation of the pentose substrate in the photorespiration process. Both reactions occur simultaneously and in competition at the same active site. The polypeptide is Ribulose bisphosphate carboxylase large chain (Cruciata glabra (Slender crosswort)).